We begin with the raw amino-acid sequence, 574 residues long: Lysyl oxidase homolog 1 (574 aa).

The N-terminal stretch at 1–25 is a signal peptide; that stretch reads MALARGSRQLGALVWGACLCVLVHG. A propeptide spanning residues 26–95 is cleaved from the precursor; that stretch reads QQAQPGQGSD…RRSHGSPRRR (70 aa). 2 disordered regions span residues 62 to 123 and 239 to 374; these read VPAG…GFGQ and GGEE…DLVP. Basic residues predominate over residues 86 to 96; sequence RRSHGSPRRRQ. Pro residues-rich tracts occupy residues 255 to 268 and 313 to 332; these read PERPYVPPPPPPPD and YANPPPEAYGPPRALEPPYL. The interval 311–369 is interaction with FBLN5; it reads PPYANPPPEAYGPPRALEPPYLPVRSSDTPPPGGERNGAQQGRLSVGSVYRPNQNGRGL. Residues 370 to 574 form a lysyl-oxidase like region; it reads PDLVPDPNYV…SATNCKIVQS (205 aa). Intrachain disulfides connect cysteine 395/cysteine 401, cysteine 448/cysteine 497, cysteine 481/cysteine 487, cysteine 508/cysteine 518, and cysteine 555/cysteine 569. Residues histidine 449, histidine 451, and histidine 453 each contribute to the Cu cation site. The segment at residues 477–512 is a cross-link (lysine tyrosylquinone (Lys-Tyr); alternate); it reads KASFCLEDSTCDFGNLKRYACTSHTQGLSPGCYDTY. Tyrosine 512 bears the 2',4',5'-topaquinone; alternate mark.

It belongs to the lysyl oxidase family. Interacts (via propeptide) with EFEMP2. Interacts with FBLN5. Cu cation serves as cofactor. It depends on lysine tyrosylquinone residue as a cofactor. Post-translationally, the lysine tyrosylquinone cross-link (LTQ) is generated by condensation of the epsilon-amino group of a lysine with a topaquinone produced by oxidation of tyrosine. Proteolytic processing by a furin-like protease causes removal of N-terminal propeptide resulting in an enzyme largely inactive, but further proteolytic processing by BMP1 results in enzyme activation. In terms of tissue distribution, expressed in ocular tissues including the iris, ciliary body, lens and optic nerve. Not detected in the retina.

The protein resides in the secreted. It is found in the extracellular space. Its subcellular location is the extracellular matrix. It carries out the reaction L-lysyl-[protein] + O2 + H2O = (S)-2-amino-6-oxohexanoyl-[protein] + H2O2 + NH4(+). In terms of biological role, catalyzes the oxidative deamination of lysine and hydroxylysine residues in collagen and elastin, resulting in the formation of covalent cross-linkages, and the stabilization of collagen and elastin fibers. Essential for the elastic fiber homeostasis and for their maintenance at adult age. The sequence is that of Lysyl oxidase homolog 1 (LOXL1) from Homo sapiens (Human).